The primary structure comprises 765 residues: 5-methyltetrahydropteroyltriglutamate--homocysteine methyltransferase (765 aa).

Residues Arg18–Lys21 and Lys114 contribute to the 5-methyltetrahydropteroyltri-L-glutamate site. L-homocysteine-binding positions include Ile437 to Ser439 and Glu490. Residues Ile437–Ser439 and Glu490 contribute to the L-methionine site. Residue Trp567 participates in 5-methyltetrahydropteroyltri-L-glutamate binding. L-homocysteine is bound at residue Asp605. Position 605 (Asp605) interacts with L-methionine. Residue Glu611 participates in 5-methyltetrahydropteroyltri-L-glutamate binding. His647, Cys649, and Glu671 together coordinate Zn(2+). His700 acts as the Proton donor in catalysis. Cys732 is a binding site for Zn(2+).

Belongs to the vitamin-B12 independent methionine synthase family. It depends on Zn(2+) as a cofactor.

It catalyses the reaction 5-methyltetrahydropteroyltri-L-glutamate + L-homocysteine = tetrahydropteroyltri-L-glutamate + L-methionine. The protein operates within amino-acid biosynthesis; L-methionine biosynthesis via de novo pathway; L-methionine from L-homocysteine (MetE route): step 1/1. Catalyzes the transfer of a methyl group from 5-methyltetrahydrofolate to homocysteine resulting in methionine formation. This is 5-methyltetrahydropteroyltriglutamate--homocysteine methyltransferase from Listeria innocua serovar 6a (strain ATCC BAA-680 / CLIP 11262).